A 265-amino-acid chain; its full sequence is MAGHTTADYISHHLTFLTTGQGFWNVHLDTLFFSLVSGVLFLFFFYRIASKATSGVPGKFQCLVEMLVEWVDGVVKDNIHGSDVRHQIGSLALTIFCWVFIMNAIDLIPVDFPPQFAELLGIHYLRAVPTADISATLGMSVCVFALIIFYTIKSKGLGGFVKEYTLHPFNHWAFIPVNFLLEAVTLLAKPISLAFRLFGNMYAGELIFVLIAVMYMADNIIPQVLGIPLHLIWAIFHILVITLQAFIFMMLTVVYLSIAYNKSDH.

6 helical membrane-spanning segments follow: residues 26 to 46, 88 to 108, 132 to 152, 168 to 188, 195 to 217, and 231 to 251; these read VHLD…FFFY, IGSL…IDLI, DISA…FYTI, PFNH…TLLA, FRLF…MYMA, and LIWA…FMML.

This sequence belongs to the ATPase A chain family. F-type ATPases have 2 components, CF(1) - the catalytic core - and CF(0) - the membrane proton channel. CF(1) has five subunits: alpha(3), beta(3), gamma(1), delta(1), epsilon(1). CF(0) has three main subunits: a(1), b(2) and c(9-12). The alpha and beta chains form an alternating ring which encloses part of the gamma chain. CF(1) is attached to CF(0) by a central stalk formed by the gamma and epsilon chains, while a peripheral stalk is formed by the delta and b chains.

It localises to the cell inner membrane. Its function is as follows. Key component of the proton channel; it plays a direct role in the translocation of protons across the membrane. This Histophilus somni (strain 2336) (Haemophilus somnus) protein is ATP synthase subunit a.